The following is a 467-amino-acid chain: UDP-N-acetylmuramate--L-alanine ligase (467 aa).

114–120 (GTHGKTT) contributes to the ATP binding site.

Belongs to the MurCDEF family.

It localises to the cytoplasm. It catalyses the reaction UDP-N-acetyl-alpha-D-muramate + L-alanine + ATP = UDP-N-acetyl-alpha-D-muramoyl-L-alanine + ADP + phosphate + H(+). It functions in the pathway cell wall biogenesis; peptidoglycan biosynthesis. Functionally, cell wall formation. The protein is UDP-N-acetylmuramate--L-alanine ligase of Nitrobacter winogradskyi (strain ATCC 25391 / DSM 10237 / CIP 104748 / NCIMB 11846 / Nb-255).